The primary structure comprises 97 residues: U6-theraphotoxin-Hhn1a 2 (97 aa).

The N-terminal stretch at 1–33 (MLIKQFSRRPKNMKVQILLAFAALFVLAVGSYA) is a signal peptide. A propeptide spanning residues 34–61 (SESKKLDLRDASFSAMFSADYQLNPQER) is cleaved from the precursor. Disulfide bonds link C63–C77, C70–C82, and C76–C89.

This sequence belongs to the neurotoxin 10 (Hwtx-1) family. 12 (Hntx-12) subfamily. Expressed by the venom gland.

It localises to the secreted. In terms of biological role, ion channel inhibitor. The sequence is that of U6-theraphotoxin-Hhn1a 2 from Cyriopagopus hainanus (Chinese bird spider).